Here is a 374-residue protein sequence, read N- to C-terminus: MSPAKVSANDVPMHGNGFYSSNSALQHSAMLNALPLLAAAAAASKAKQQEEQENSRPFAILEFGSAHGNNSHTPITTVLKSRAPAPSREIHLQFNDRPTNDFSTLATNLTTMTWPVSNAIFTSLLPASFYSRVSPKGSVDVAFSLAALHHLDRVTPVPPEGPIPTHEVRQAEFRAQAHADLLSFLSHRAEEIVPGGGLVLSFVGQELGPNGEEITNYAGPVDACRSAMIDMLQAGVLSPAVANVFEVPAYNRTIADVRRTLAEGEVVAAWEVEEVFERKVVHPALQELEARREAAPGKEEEHAEWYARTVVDWLMAVVAGYFVKAVREGMGVTDQTVLDGLLAEWVERTRGRFLEGHRNEPVECWFVYVRLGRK.

S-adenosyl-L-homocysteine is bound by residues Tyr19, Asn70, Asp96, Ser128, and Phe129. Phe245 contributes to the Mg(2+) binding site.

Belongs to the methyltransferase superfamily. Type-7 methyltransferase family.

Its pathway is secondary metabolite biosynthesis. Functionally, O-methyltransferase; part of the cluster that mediates the biosynthesis of acurin A, a highly reduced polyketide coupled to a serine via a peptide bond. The activities of the highly reducing polyketide synthase acrA and the nonribosomal peptide synthetase acrB are collectively responsible for the synthesis of the acurin A core structure with a heptaketide backbone produced by acrA covalently fused to a L-serine by acrB. After the formation of the PK-NRP hybrid product, it is detached from acrB by reductive release to set up the formation of the lactam ring by aldol condensation. The hydrolyase acrC then catalyzes water loss to generate a double bond in the ring. This double bond is probably reduced, which is followed by three oxidations at C-22 to generate the carboxylic acid moiety, involving probably the FAD-binding monooxygenase acrE and the cytochrome P450 monooxygenases acrD and acrF. Finally, a last methylation step performed by the O-methyltransferase acrG leads to the production of acurin A. The chain is O-methyltransferase acrG from Aspergillus aculeatus (strain ATCC 16872 / CBS 172.66 / WB 5094).